The chain runs to 84 residues: UPF0457 protein BT9727_2307 (84 aa).

The protein belongs to the UPF0457 family.

This Bacillus thuringiensis subsp. konkukian (strain 97-27) protein is UPF0457 protein BT9727_2307.